The chain runs to 414 residues: Probable uracil permease (414 aa).

Residues 1–14 (MTNQIPPSLAENQS) are Cytoplasmic-facing. The chain crosses the membrane as a helical span at residues 15–38 (KLKQSFVGLQMLFVAFGALVLVPL). Topologically, residues 39–42 (ITGL) are periplasmic. The chain crosses the membrane as a helical span at residues 43–62 (DSNTALLTAGVGTLLFQFCT). Residues 63 to 65 (GKQ) lie on the Cytoplasmic side of the membrane. Residues 66–82 (VPIFLASSFAFIAPIQY) traverse the membrane as a discontinuously helical segment. Residue Phe74 participates in uracil binding. Residues 83–91 (GVQTWGIAT) are Periplasmic-facing. The helical transmembrane segment at 92–112 (TMGGLAFTGLVYFALSTLVKL) threads the bilayer. Residues 113-124 (RGAEALQRFFPP) lie on the Cytoplasmic side of the membrane. The helical transmembrane segment at 125 to 146 (VVVGPVIIIIGMGLAPIAVDMS) threads the bilayer. The Periplasmic portion of the chain corresponds to 147 to 155 (LGKNSAYAY). Residues 156 to 171 (NDAVLVSMVTLLTTLS) traverse the membrane as a helical segment. Over 172–178 (VAVFAKG) the chain is Cytoplasmic. A helical transmembrane segment spans residues 179 to 199 (LMKLIPIMFGITAGYILCLFL). Over 200-224 (GLINFQPVIDAPWFSLPKLTTPEFN) the chain is Periplasmic. The helical transmembrane segment at 225–248 (LEAILYMLPIAIAPAVEHVGGIMA) threads the bilayer. Glu241 is a uracil binding site. The Cytoplasmic segment spans residues 249-261 (ISSVTGKDFLKKP). The chain crosses the membrane as a helical span at residues 262-281 (GLHRTLLGDGIATAAASLVG). Residues 282 to 298 (GPPNTTYAEVTGAVMLT) form a discontinuously helical membrane-spanning segment. Glu290 is a uracil binding site. At 299–301 (RNF) the chain is on the cytoplasmic side. The helical transmembrane segment at 302–319 (NPNIMTWAAVWAIAISFC) threads the bilayer. Residues 320–332 (GKVGAFLSTIPTI) are Periplasmic-facing. A helical transmembrane segment spans residues 333-354 (VMGGIMMLVFGSIAVVGMSTLI). The Cytoplasmic segment spans residues 355–365 (RGKVDVTEARN). Residues 366–401 (LCIISVVMTFGIGNMFVDVGNVSLKGISLCAIVAII) constitute an intramembrane region (discontinuously helical). Residues 402–414 (LNLVLPKAKNEVE) lie on the Cytoplasmic side of the membrane.

The protein belongs to the nucleobase:cation symporter-2 (NCS2) (TC 2.A.40) family.

Its subcellular location is the cell inner membrane. The enzyme catalyses uracil(in) + H(+)(in) = uracil(out) + H(+)(out). In terms of biological role, transport of uracil in the cell. This Haemophilus influenzae (strain ATCC 51907 / DSM 11121 / KW20 / Rd) protein is Probable uracil permease (uraA).